The sequence spans 357 residues: Alanine racemase (357 aa).

The Proton acceptor; specific for D-alanine role is filled by lysine 34. Lysine 34 bears the N6-(pyridoxal phosphate)lysine mark. Residue arginine 129 coordinates substrate. Catalysis depends on tyrosine 254, which acts as the Proton acceptor; specific for L-alanine. Methionine 302 lines the substrate pocket.

Belongs to the alanine racemase family. Pyridoxal 5'-phosphate serves as cofactor.

The catalysed reaction is L-alanine = D-alanine. Its pathway is amino-acid biosynthesis; D-alanine biosynthesis; D-alanine from L-alanine: step 1/1. In terms of biological role, catalyzes the interconversion of L-alanine and D-alanine. Likely plays an important role in supplying D-alanine, which is an indispensable constituent in the biosynthesis of bacterial cell-wall peptidoglycan. This chain is Alanine racemase, found in Aeromonas hydrophila subsp. hydrophila (strain ATCC 7966 / DSM 30187 / BCRC 13018 / CCUG 14551 / JCM 1027 / KCTC 2358 / NCIMB 9240 / NCTC 8049).